A 647-amino-acid polypeptide reads, in one-letter code: Frizzled-1 (647 aa).

A signal peptide spans 1 to 69; the sequence is MAEEEAPKKS…WLLEAPLLLG (69 aa). Over 73 to 322 the chain is Extracellular; that stretch reads QAAGQGPGQG…PEELRFSRTW (250 aa). A disordered region spans residues 74–104; it reads AAGQGPGQGPGPGQQPPPPPQQQQSGQQYNG. Positions 111–230 constitute an FZ domain; the sequence is PDHGYCQPIS…HGAGELCVGQ (120 aa). 5 cysteine pairs are disulfide-bonded: C116/C177, C124/C170, C161/C198, C187/C227, and C191/C215. N130 is a glycosylation site (N-linked (GlcNAc...) asparagine). N231 carries an N-linked (GlcNAc...) asparagine glycan. A helical membrane pass occupies residues 323–343; that stretch reads IGIWSVLCCASTLFTVLTYLV. Residues 344-354 lie on the Cytoplasmic side of the membrane; the sequence is DMRRFSYPERP. A helical membrane pass occupies residues 355–375; it reads IIFLSGCYTAVAVAYIAGFLL. Residues 376–402 are Extracellular-facing; the sequence is EDRVVCNDKFAEDGARTVAQGTKKEGC. A helical transmembrane segment spans residues 403 to 423; that stretch reads TILFMMLYFFSMASSIWWVIL. Topologically, residues 424 to 445 are cytoplasmic; the sequence is SLTWFLAAGMKWGHEAIEANSQ. The chain crosses the membrane as a helical span at residues 446–466; that stretch reads YFHLAAWAVPAIKTITILALG. At 467 to 489 the chain is on the extracellular side; the sequence is QVDGDVLSGVCFVGLNNVDALRG. The helical transmembrane segment at 490-510 threads the bilayer; the sequence is FVLAPLFVYLFIGTSFLLAGF. Residues 511–536 lie on the Cytoplasmic side of the membrane; the sequence is VSLFRIRTIMKHDGTKTEKLEKLMVR. The helical transmembrane segment at 537–557 threads the bilayer; the sequence is IGVFSVLYTVPATIVIACYFY. Over 558–601 the chain is Extracellular; that stretch reads EQAFRDQWERSWVAQSCKSYAIPCPHLQAGGGAPPHPPMSPDFT. A helical transmembrane segment spans residues 602–622; the sequence is VFMIKYLMTLIVGITSGFWIW. The Cytoplasmic portion of the chain corresponds to 623–647; it reads SGKTLNSWRKFYTRLTNSKQGETTV. Positions 625-630 match the Lys-Thr-X-X-X-Trp motif, mediates interaction with the PDZ domain of Dvl family members motif; the sequence is KTLNSW. A PDZ-binding motif is present at residues 645 to 647; sequence TTV.

Belongs to the G-protein coupled receptor Fz/Smo family. Interacts with MYOC. Interacts with WNT7B. In terms of assembly, (Microbial infection) Interacts with C.difficile toxin TcdB; frizzled receptors constitute the major host receptors for TcdB in the colonic epithelium. In terms of processing, ubiquitinated by ZNRF3, leading to its degradation by the proteasome. Expressed in adult heart, placenta, lung, kidney, pancreas, prostate, and ovary and in fetal lung and kidney.

The protein localises to the cell membrane. Receptor for Wnt proteins. Activated by WNT3A, WNT3, WNT1 and to a lesser extent WNT2, but apparently not by WNT4, WNT5A, WNT5B, WNT6, WNT7A or WNT7B. Contradictory results showing activation by WNT7B have been described for mouse. Functions in the canonical Wnt/beta-catenin signaling pathway. The canonical Wnt/beta-catenin signaling pathway leads to the activation of disheveled proteins, inhibition of GSK-3 kinase, nuclear accumulation of beta-catenin and activation of Wnt target genes. A second signaling pathway involving PKC and calcium fluxes has been seen for some family members, but it is not yet clear if it represents a distinct pathway or if it can be integrated in the canonical pathway, as PKC seems to be required for Wnt-mediated inactivation of GSK-3 kinase. Both pathways seem to involve interactions with G-proteins. May be involved in transduction and intercellular transmission of polarity information during tissue morphogenesis and/or in differentiated tissues. In terms of biological role, (Microbial infection) Acts as a receptor for C.difficile toxin TcdB in the colonic epithelium. The protein is Frizzled-1 (FZD1) of Homo sapiens (Human).